A 407-amino-acid polypeptide reads, in one-letter code: Tryptophan synthase beta chain (407 aa).

Residue K91 is modified to N6-(pyridoxal phosphate)lysine.

This sequence belongs to the TrpB family. As to quaternary structure, tetramer of two alpha and two beta chains. Pyridoxal 5'-phosphate serves as cofactor.

It carries out the reaction (1S,2R)-1-C-(indol-3-yl)glycerol 3-phosphate + L-serine = D-glyceraldehyde 3-phosphate + L-tryptophan + H2O. It functions in the pathway amino-acid biosynthesis; L-tryptophan biosynthesis; L-tryptophan from chorismate: step 5/5. In terms of biological role, the beta subunit is responsible for the synthesis of L-tryptophan from indole and L-serine. In Streptococcus pneumoniae (strain Taiwan19F-14), this protein is Tryptophan synthase beta chain.